The following is a 160-amino-acid chain: Large ribosomal subunit protein eL21 (160 aa).

2 stretches are compositionally biased toward basic and acidic residues: residues 112–123 (NDQKKKEAKEKG) and 136–146 (REAHFVRTNGK). The segment at 112-146 (NDQKKKEAKEKGTWVQLNGQPAPPREAHFVRTNGK) is disordered.

Belongs to the eukaryotic ribosomal protein eL21 family. In terms of assembly, component of the large ribosomal subunit.

The protein resides in the cytoplasm. The protein localises to the cytosol. It is found in the endoplasmic reticulum. Functionally, component of the large ribosomal subunit. The ribosome is a large ribonucleoprotein complex responsible for the synthesis of proteins in the cell. The protein is Large ribosomal subunit protein eL21 (Rpl21) of Rattus norvegicus (Rat).